A 239-amino-acid chain; its full sequence is tRNA (guanine-N(1)-)-methyltransferase (239 aa).

Residues G108 and 127-132 each bind S-adenosyl-L-methionine; that span reads LGDFVL.

The protein belongs to the RNA methyltransferase TrmD family. Homodimer.

Its subcellular location is the cytoplasm. It catalyses the reaction guanosine(37) in tRNA + S-adenosyl-L-methionine = N(1)-methylguanosine(37) in tRNA + S-adenosyl-L-homocysteine + H(+). Specifically methylates guanosine-37 in various tRNAs. In Streptococcus pyogenes serotype M6 (strain ATCC BAA-946 / MGAS10394), this protein is tRNA (guanine-N(1)-)-methyltransferase.